The sequence spans 122 residues: Large ribosomal subunit protein uL14 (122 aa).

The protein belongs to the universal ribosomal protein uL14 family. Part of the 50S ribosomal subunit. Forms a cluster with proteins L3 and L19. In the 70S ribosome, L14 and L19 interact and together make contacts with the 16S rRNA in bridges B5 and B8.

Its function is as follows. Binds to 23S rRNA. Forms part of two intersubunit bridges in the 70S ribosome. The chain is Large ribosomal subunit protein uL14 from Rhizobium johnstonii (strain DSM 114642 / LMG 32736 / 3841) (Rhizobium leguminosarum bv. viciae).